The chain runs to 264 residues: S-adenosylmethionine decarboxylase proenzyme (264 aa).

Residue S113 is the Schiff-base intermediate with substrate; via pyruvic acid of the active site. S113 is subject to Pyruvic acid (Ser); by autocatalysis. H118 (proton acceptor; for processing activity) is an active-site residue. The active-site Proton donor; for catalytic activity is the C141.

The protein belongs to the prokaryotic AdoMetDC family. Type 2 subfamily. In terms of assembly, heterooctamer of four alpha and four beta chains arranged as a tetramer of alpha/beta heterodimers. It depends on pyruvate as a cofactor. Post-translationally, is synthesized initially as an inactive proenzyme. Formation of the active enzyme involves a self-maturation process in which the active site pyruvoyl group is generated from an internal serine residue via an autocatalytic post-translational modification. Two non-identical subunits are generated from the proenzyme in this reaction, and the pyruvate is formed at the N-terminus of the alpha chain, which is derived from the carboxyl end of the proenzyme. The post-translation cleavage follows an unusual pathway, termed non-hydrolytic serinolysis, in which the side chain hydroxyl group of the serine supplies its oxygen atom to form the C-terminus of the beta chain, while the remainder of the serine residue undergoes an oxidative deamination to produce ammonia and the pyruvoyl group blocking the N-terminus of the alpha chain.

The catalysed reaction is S-adenosyl-L-methionine + H(+) = S-adenosyl 3-(methylsulfanyl)propylamine + CO2. It participates in amine and polyamine biosynthesis; S-adenosylmethioninamine biosynthesis; S-adenosylmethioninamine from S-adenosyl-L-methionine: step 1/1. Catalyzes the decarboxylation of S-adenosylmethionine to S-adenosylmethioninamine (dcAdoMet), the propylamine donor required for the synthesis of the polyamines spermine and spermidine from the diamine putrescine. The chain is S-adenosylmethionine decarboxylase proenzyme from Pseudomonas syringae pv. syringae (strain B728a).